The following is a 93-amino-acid chain: MSSGGLLLLLGLLTLWAELTPVSTRDRPKFCYLPADPGRCLAYMPSFYYDSASNKCKKFIYGGCRGNANNFKTWDECRHTCVASGIQPRIASN.

An N-terminal signal peptide occupies residues 1 to 24 (MSSGGLLLLLGLLTLWAELTPVST). The region spanning 31–81 (CYLPADPGRCLAYMPSFYYDSASNKCKKFIYGGCRGNANNFKTWDECRHTC) is the BPTI/Kunitz inhibitor domain. 3 disulfides stabilise this stretch: C31–C81, C40–C64, and C56–C77. Residues 90–93 (IASN) constitute a propeptide that is removed on maturation.

Belongs to the venom Kunitz-type family. As to expression, expressed by the venom gland.

The protein localises to the secreted. Its function is as follows. Serine protease inhibitor that principally inhibits alpha-chymotrypsin (Ki=4.3 nM). Shows weak inhibition on trypsin (Ki=5100 nM), and plasma kallikrein. This Vipera ammodytes ammodytes (Western sand viper) protein is Kunitz-type serine protease inhibitor 3.